Reading from the N-terminus, the 369-residue chain is sn-glycerol-3-phosphate import ATP-binding protein UgpC 1 (369 aa).

One can recognise an ABC transporter domain in the interval 4–234 (ISIRGVKKNY…PVSRFVAGFV (231 aa)). Position 36–43 (36–43 (GPSGCGKS)) interacts with ATP.

This sequence belongs to the ABC transporter superfamily. sn-glycerol-3-phosphate importer (TC 3.A.1.1.3) family. As to quaternary structure, the complex is composed of two ATP-binding proteins (UgpC), two transmembrane proteins (UgpA and UgpE) and a solute-binding protein (UgpB).

It is found in the cell inner membrane. It catalyses the reaction sn-glycerol 3-phosphate(out) + ATP + H2O = sn-glycerol 3-phosphate(in) + ADP + phosphate + H(+). Its function is as follows. Part of the ABC transporter complex UgpBAEC involved in sn-glycerol-3-phosphate (G3P) import. Responsible for energy coupling to the transport system. The protein is sn-glycerol-3-phosphate import ATP-binding protein UgpC 1 of Rhizobium johnstonii (strain DSM 114642 / LMG 32736 / 3841) (Rhizobium leguminosarum bv. viciae).